Here is a 705-residue protein sequence, read N- to C-terminus: Choline transporter-like protein 2 (705 aa).

Topologically, residues 1-31 are cytoplasmic; it reads MEDQRKYGAYGTPQKYDPTFKGPIYNRGCTD. T12 bears the Phosphothreonine mark. Residues 32 to 52 traverse the membrane as a helical segment; it reads VLCCVLLFLAIVGYVAVGLIA. The Extracellular segment spans residues 53–231; the sequence is WTHGDPRKVI…RIFEDYTVSW (179 aa). N-linked (GlcNAc...) asparagine glycosylation is found at N186 and N199. Residues 232–252 form a helical membrane-spanning segment; the sequence is YWIVIGLVIAMVLSLLFIILL. Residues 253 to 255 are Cytoplasmic-facing; sequence RFL. The helical transmembrane segment at 256–276 threads the bilayer; that stretch reads AGIMVWVMIVLVILVLGYGIF. The Extracellular segment spans residues 277 to 314; it reads HCYMEYARLRGEAGSDISVLDLGFQTDFRVYLHLRQTW. The chain crosses the membrane as a helical span at residues 315–335; that stretch reads LAFMIILSILEVIIILLLIFL. Residues 336-363 are Cytoplasmic-facing; the sequence is RKRILIAIALIKEASRAVGYVMCSLLYP. The chain crosses the membrane as a helical span at residues 364–384; sequence LVTFFLLCLCIAYWASTAVFL. Residues 385–455 lie on the Extracellular side of the membrane; it reads STSNEAVYKI…IFNAFMFFWL (71 aa). N414 carries an N-linked (GlcNAc...) asparagine glycan. A helical transmembrane segment spans residues 456 to 478; it reads ANFVLALGQVTLAGAFASYYWAL. Residues 479-503 are Cytoplasmic-facing; sequence RKPDDMPAFPLFAAFGRALRYHTGS. A helical transmembrane segment spans residues 504–524; sequence LAFGSLILAIVQIIRVILEYL. Residues 525–562 are Extracellular-facing; that stretch reads DQRLKAAENKFAKFLMTCLKCCFWCLEKFIKFLNRNAY. The helical transmembrane segment at 563–583 threads the bilayer; it reads IMIAIYGTNFCTSARNAFFLL. The Cytoplasmic portion of the chain corresponds to 584 to 598; it reads MRNIIRVAVLDKVTD. The helical transmembrane segment at 599–619 threads the bilayer; it reads FLFLLGKLLIVGSVGILAFFF. Topologically, residues 620-637 are extracellular; sequence FTHRIRIVQDTAPPLNYY. The helical transmembrane segment at 638–658 threads the bilayer; that stretch reads WVPILTVIVGSYLIAHGFFSV. At 659–705 the chain is on the cytoplasmic side; it reads YGMCVDTLFLCFLEDLERNNGSSERPYFMSSTLKKLLNKTNKKPVES.

It belongs to the CTL (choline transporter-like) family. As to quaternary structure, interacts with COCH. In terms of processing, N-glycosylated; contains sialic acid. Not O-glycosylated. As to expression, expressed at high levels in lung, colon and in supporting cells of the inner ear (at protein level). Progressively lower levels in brain, tongue, liver and kidney (at protein level). In the tongue, strongly expressed in epithelial cells and in nerves within the musculature. Within the nerves, expression observed in the perineurial cells of the nerve sheath, in the Schwann cells and myelinated nerve fibers (at protein level). In the kidney, prominent expression in glomeruli in the lining of Bowman's capsule and on the mesangial cells adjacent to the vessels within the glomerulus (at protein level). Strongly expressed on the membranes of splenocytes (at protein level).

It localises to the cell membrane. It is found in the mitochondrion outer membrane. The catalysed reaction is choline(out) + n H(+)(in) = choline(in) + n H(+)(out). It carries out the reaction ethanolamine(out) + n H(+)(in) = ethanolamine(in) + n H(+)(out). In terms of biological role, choline/H+ antiporter, mainly in mitochodria. Also acts as a low-affinity ethanolamine/H+ antiporter, regulating the supply of extracellular ethanolamine (Etn) for the CDP-Etn pathway, redistribute intracellular Etn and balance the CDP-Cho and CDP-Etn arms of the Kennedy pathway. This is Choline transporter-like protein 2 (SLC44A2) from Cavia porcellus (Guinea pig).